A 366-amino-acid polypeptide reads, in one-letter code: tRNA(Met) cytidine acetate ligase (366 aa).

ATP-binding positions include 7–20, glycine 96, asparagine 152, and arginine 175; that span reads IAEF…HQYL.

It belongs to the TmcAL family.

The protein localises to the cytoplasm. It catalyses the reaction cytidine(34) in elongator tRNA(Met) + acetate + ATP = N(4)-acetylcytidine(34) in elongator tRNA(Met) + AMP + diphosphate. Its function is as follows. Catalyzes the formation of N(4)-acetylcytidine (ac(4)C) at the wobble position of elongator tRNA(Met), using acetate and ATP as substrates. First activates an acetate ion to form acetyladenylate (Ac-AMP) and then transfers the acetyl group to tRNA to form ac(4)C34. The protein is tRNA(Met) cytidine acetate ligase of Streptococcus equi subsp. zooepidemicus (strain H70).